The primary structure comprises 101 residues: Protein Tat (101 aa).

The segment at 1–24 (MDPVDPNLEPWNHPGSQPKTPCNK) is interaction with human CREBBP. Residues 1 to 48 (MDPVDPNLEPWNHPGSQPKTPCNKCFCKVCCWHCQVCFLNKGLGISYG) are transactivation. Zn(2+) contacts are provided by Cys22, Cys25, and Cys27. Residues 22 to 37 (CNKCFCKVCCWHCQVC) are cysteine-rich. N6-acetyllysine; by host PCAF is present on Lys28. Zn(2+)-binding residues include Cys30, His33, Cys34, and Cys37. The interval 38-48 (FLNKGLGISYG) is core. Residues 48–57 (GRKKRKHRRG) show a composition bias toward basic residues. The interval 48–101 (GRKKRKHRRGTPQSSKGHQDPVPKQPLPTTRGNPTGPKESKKEVASKAEADQCD) is disordered. The short motif at 49-57 (RKKRKHRRG) is the Nuclear localization signal, RNA-binding (TAR), and protein transduction element. The segment at 49-86 (RKKRKHRRGTPQSSKGHQDPVPKQPLPTTRGNPTGPKE) is interaction with the host capping enzyme RNGTT. N6-acetyllysine; by host EP300 and GCN5L2 occurs at positions 50 and 51. Position 52 is an asymmetric dimethylarginine; by host PRMT6 (Arg52). Lys71 participates in a covalent cross-link: Glycyl lysine isopeptide (Lys-Gly) (interchain with G-Cter in ubiquitin). The segment covering 85–101 (KESKKEVASKAEADQCD) has biased composition (basic and acidic residues).

This sequence belongs to the lentiviruses Tat family. In terms of assembly, interacts with host CCNT1. Associates with the P-TEFb complex composed at least of Tat, P-TEFb (CDK9 and CCNT1), TAR RNA, RNA Pol II. Recruits the HATs CREBBP, TAF1/TFIID, EP300, PCAF and GCN5L2. Interacts with host KAT5/Tip60; this interaction targets the latter to degradation. Interacts with the host deacetylase SIRT1. Interacts with host capping enzyme RNGTT; this interaction stimulates RNGTT. Binds to host KDR, and to the host integrins ITGAV/ITGB3 and ITGA5/ITGB1. Interacts with host KPNB1/importin beta-1 without previous binding to KPNA1/importin alpha-1. Interacts with EIF2AK2. Interacts with host nucleosome assembly protein NAP1L1; this interaction may be required for the transport of Tat within the nucleus, since the two proteins interact at the nuclear rim. Interacts with host C1QBP/SF2P32; this interaction involves lysine-acetylated Tat. Interacts with the host chemokine receptors CCR2, CCR3 and CXCR4. Interacts with host DPP4/CD26; this interaction may trigger an anti-proliferative effect. Interacts with host LDLR. Interacts with the host extracellular matrix metalloproteinase MMP1. Interacts with host PRMT6; this interaction mediates Tat's methylation. Interacts with, and is ubiquitinated by MDM2/Hdm2. Interacts with host PSMC3 and HTATIP2. Interacts with STAB1; this interaction may overcome SATB1-mediated repression of IL2 and IL2RA (interleukin) in T cells by binding to the same domain than HDAC1. Interacts (when acetylated) with human CDK13, thereby increasing HIV-1 mRNA splicing and promoting the production of the doubly spliced HIV-1 protein Nef. Interacts with host TBP; this interaction modulates the activity of transcriptional pre-initiation complex. Interacts with host RELA. Interacts with host PLSCR1; this interaction negatively regulates Tat transactivation activity by altering its subcellular distribution. Asymmetrical arginine methylation by host PRMT6 seems to diminish the transactivation capacity of Tat and affects the interaction with host CCNT1. Post-translationally, acetylation by EP300, CREBBP, GCN5L2/GCN5 and PCAF regulates the transactivation activity of Tat. EP300-mediated acetylation of Lys-50 promotes dissociation of Tat from the TAR RNA through the competitive binding to PCAF's bromodomain. In addition, the non-acetylated Tat's N-terminus can also interact with PCAF. PCAF-mediated acetylation of Lys-28 enhances Tat's binding to CCNT1. Lys-50 is deacetylated by SIRT1. In terms of processing, polyubiquitination by host MDM2 does not target Tat to degradation, but activates its transactivation function and fosters interaction with CCNT1 and TAR RNA. Phosphorylated by EIF2AK2 on serine and threonine residues adjacent to the basic region important for TAR RNA binding and function. Phosphorylation of Tat by EIF2AK2 is dependent on the prior activation of EIF2AK2 by dsRNA.

The protein localises to the host nucleus. Its subcellular location is the host nucleolus. It is found in the host cytoplasm. The protein resides in the secreted. Transcriptional activator that increases RNA Pol II processivity, thereby increasing the level of full-length viral transcripts. Recognizes a hairpin structure at the 5'-LTR of the nascent viral mRNAs referred to as the transactivation responsive RNA element (TAR) and recruits the cyclin T1-CDK9 complex (P-TEFb complex) that will in turn hyperphosphorylate the RNA polymerase II to allow efficient elongation. The CDK9 component of P-TEFb and other Tat-activated kinases hyperphosphorylate the C-terminus of RNA Pol II that becomes stabilized and much more processive. Other factors such as HTATSF1/Tat-SF1, SUPT5H/SPT5, and HTATIP2 are also important for Tat's function. Besides its effect on RNA Pol II processivity, Tat induces chromatin remodeling of proviral genes by recruiting the histone acetyltransferases (HATs) CREBBP, EP300 and PCAF to the chromatin. This also contributes to the increase in proviral transcription rate, especially when the provirus integrates in transcriptionally silent region of the host genome. To ensure maximal activation of the LTR, Tat mediates nuclear translocation of NF-kappa-B by interacting with host RELA. Through its interaction with host TBP, Tat may also modulate transcription initiation. Tat can reactivate a latently infected cell by penetrating in it and transactivating its LTR promoter. In the cytoplasm, Tat is thought to act as a translational activator of HIV-1 mRNAs. Its function is as follows. Extracellular circulating Tat can be endocytosed by surrounding uninfected cells via the binding to several surface receptors such as CD26, CXCR4, heparan sulfate proteoglycans (HSPG) or LDLR. Neurons are rarely infected, but they internalize Tat via their LDLR. Through its interaction with nuclear HATs, Tat is potentially able to control the acetylation-dependent cellular gene expression. Modulates the expression of many cellular genes involved in cell survival, proliferation or in coding for cytokines or cytokine receptors. Tat plays a role in T-cell and neurons apoptosis. Tat induced neurotoxicity and apoptosis probably contribute to neuroAIDS. Circulating Tat also acts as a chemokine-like and/or growth factor-like molecule that binds to specific receptors on the surface of the cells, affecting many cellular pathways. In the vascular system, Tat binds to ITGAV/ITGB3 and ITGA5/ITGB1 integrins dimers at the surface of endothelial cells and competes with bFGF for heparin-binding sites, leading to an excess of soluble bFGF. The chain is Protein Tat from Homo sapiens (Human).